The following is a 219-amino-acid chain: tRNA (guanine-N(7)-)-methyltransferase (219 aa).

Residues E46, E71, D100, and D122 each coordinate S-adenosyl-L-methionine. D122 is a catalytic residue. K126 provides a ligand contact to substrate. Residues K128–R133 are interaction with RNA. Substrate-binding positions include D158 and T199–E202.

This sequence belongs to the class I-like SAM-binding methyltransferase superfamily. TrmB family.

It carries out the reaction guanosine(46) in tRNA + S-adenosyl-L-methionine = N(7)-methylguanosine(46) in tRNA + S-adenosyl-L-homocysteine. It functions in the pathway tRNA modification; N(7)-methylguanine-tRNA biosynthesis. In terms of biological role, catalyzes the formation of N(7)-methylguanine at position 46 (m7G46) in tRNA. The chain is tRNA (guanine-N(7)-)-methyltransferase from Oenococcus oeni (strain ATCC BAA-331 / PSU-1).